A 419-amino-acid chain; its full sequence is MEGEELETTGSLSEVFQPEVTMAVTGEPPKPAEEELEEEEEETSPEVIDTLSLLDVLRVSAIMEDIIDQLSILGYIIPVQYERRQSLSQKTSHEGAPMVPSTPKISASLIAKDKPVVSDSKQRGQDFFFKKATKQTTMTLETMRKIQNDRQYFSDVIANAMMEMQACGSFSSLLEALGKERDAKMNFHDVITREGKGRKQIKSLQKQLVDVKRERQMQVQNGNEYIAHLRDQLQEVKAKTNLENLYMKRNTELQVSQTQKKCNRAEELLLEEIEKLRLKTEEENRVHMEIEMFLRNQQQKLEEKLEFWMEKFDKDTEAKQNELNALKAAKASDLAHLQDLAKMIREYEQVIIEDRLEKEKTRKKLEQDDLELRSIVKLQAWWRGTVVRREIGSFKMPKKEKDDSKDAKGKEKDKRRGKK.

Disordered regions lie at residues 1–47 and 393–419; these read MEGE…SPEV and SFKMPKKEKDDSKDAKGKEKDKRRGKK. Positions 34–44 are enriched in acidic residues; sequence EELEEEEEETS. Positions 371–400 constitute an IQ domain; that stretch reads ELRSIVKLQAWWRGTVVRREIGSFKMPKKE.

This sequence belongs to the DRC9 family. Component of the nexin-dynein regulatory complex (N-DRC). Interacts (via IQ domain) with CALM when calcium levels are low. Does not interact with CALM in the presence of Ca(2+). Interacts with the HSP70 proteins HSPA1L and HSPA8. May form a complex with CAMK4 and HSP70.

It is found in the cytoplasm. The protein resides in the cell projection. Its subcellular location is the cilium. The protein localises to the flagellum. It localises to the cytoskeleton. It is found in the flagellum axoneme. Functionally, component of the nexin-dynein regulatory complex (N-DRC), a key regulator of ciliary/flagellar motility which maintains the alignment and integrity of the distal axoneme and regulates microtubule sliding in motile axonemes. Binds calmodulin when cellular Ca(2+) levels are low and thereby contributes to the regulation of calcium and calmodulin-dependent protein kinase IV (CAMK4) activity; contributes to the regulation of CAMK4 signaling cascades. Required for normal axoneme assembly in sperm flagella, normal sperm tail formation and for male fertility. The chain is Dynein regulatory complex protein 9 (Iqcg) from Rattus norvegicus (Rat).